The primary structure comprises 133 residues: Ubiquitin-like FUBI-ribosomal protein eS30 fusion protein (133 aa).

The 74-residue stretch at 1-74 folds into the Ubiquitin-like domain; it reads MQLFVRAQEL…LEVAGRMLGG (74 aa). Lys-125 is subject to N6-succinyllysine.

It in the N-terminal section; belongs to the ubiquitin family. The protein in the C-terminal section; belongs to the eukaryotic ribosomal protein eS30 family. Component of the 40S subunit of the ribosome. FUBI is cleaved from ribosomal protein S30 by the deubiquitinase USP36 before the assembly of ribosomal protein S30 into pre-40S ribosomal particles. FUBI removal from ribosomal protein S30 is a crucial event for the final maturation of pre-40S particles.

The protein localises to the cytoplasm. The protein resides in the nucleus. May have pro-apoptotic activity. Functionally, component of the 40S subunit of the ribosome. Contributes to the assembly and function of 40S ribosomal subunits. In Oryctolagus cuniculus (Rabbit), this protein is Ubiquitin-like FUBI-ribosomal protein eS30 fusion protein (FAU).